The chain runs to 373 residues: Flap endonuclease 1 (373 aa).

The N-domain stretch occupies residues 1–105 (MGIKGLNALI…GELEKRLKRR (105 aa)). Asp34 contacts Mg(2+). DNA contacts are provided by Arg47 and Arg71. The Mg(2+) site is built by Asp87, Glu159, Glu161, Asp180, and Asp182. Residues 123 to 254 (DIAKFERRTV…VTAFKLIKEH (132 aa)) are I-domain. Glu159 is a DNA binding site. Positions 232 and 234 each coordinate DNA. Asp234 is a binding site for Mg(2+). The tract at residues 340 to 348 (TQGRLDKFF) is interaction with PCNA. The tract at residues 347-373 (FFVVKKRPAEEKKGKNTKEEKPKKKRK) is disordered.

This sequence belongs to the XPG/RAD2 endonuclease family. FEN1 subfamily. In terms of assembly, interacts with PCNA. Three molecules of FEN1 bind to one PCNA trimer with each molecule binding to one PCNA monomer. PCNA stimulates the nuclease activity without altering cleavage specificity. Requires Mg(2+) as cofactor. Phosphorylated. Phosphorylation upon DNA damage induces relocalization to the nuclear plasma.

It localises to the nucleus. It is found in the nucleolus. Its subcellular location is the nucleoplasm. The protein localises to the mitochondrion. In terms of biological role, structure-specific nuclease with 5'-flap endonuclease and 5'-3' exonuclease activities involved in DNA replication and repair. During DNA replication, cleaves the 5'-overhanging flap structure that is generated by displacement synthesis when DNA polymerase encounters the 5'-end of a downstream Okazaki fragment. It enters the flap from the 5'-end and then tracks to cleave the flap base, leaving a nick for ligation. Also involved in the long patch base excision repair (LP-BER) pathway, by cleaving within the apurinic/apyrimidinic (AP) site-terminated flap. Acts as a genome stabilization factor that prevents flaps from equilibrating into structures that lead to duplications and deletions. Also possesses 5'-3' exonuclease activity on nicked or gapped double-stranded DNA, and exhibits RNase H activity. Also involved in replication and repair of rDNA and in repairing mitochondrial DNA. This Komagataella phaffii (strain GS115 / ATCC 20864) (Yeast) protein is Flap endonuclease 1.